A 658-amino-acid polypeptide reads, in one-letter code: ATP-dependent RNA helicase MSS116, mitochondrial (658 aa).

The transit peptide at 1–35 (MFRVTGIATARAVALQPFRAPLGVIRRFGISATAS) directs the protein to the mitochondrion. The span at 40–79 (HGHDMQSRNGSRWDSRRQGDRRSSRWEGRGSDREDGERGS) shows a compositional bias: basic and acidic residues. Positions 40 to 104 (HGHDMQSRNG…DGAAREGFSL (65 aa)) are disordered. The Q motif signature appears at 126–154 (TLVEEGVLSNELYEMLQSRGFDKLTPVQQ). Positions 158 to 343 (KPILQTEHDV…NSIMNHAKCL (186 aa)) constitute a Helicase ATP-binding domain. Position 171-178 (171-178 (AKTGTGKT)) interacts with ATP. Residues 284–287 (DEAD) carry the DEAD box motif. Positions 372 to 528 (NITASLYKIR…TFDAAAQELS (157 aa)) constitute a Helicase C-terminal domain.

Belongs to the DEAD box helicase family. DDX18/HAS1 subfamily.

The protein localises to the mitochondrion matrix. It catalyses the reaction ATP + H2O = ADP + phosphate + H(+). Its function is as follows. ATP-dependent RNA helicase required for mitochondrial splicing of group I and II introns. Also required for efficient mitochondrial translation. This is ATP-dependent RNA helicase MSS116, mitochondrial (MSS116) from Eremothecium gossypii (strain ATCC 10895 / CBS 109.51 / FGSC 9923 / NRRL Y-1056) (Yeast).